An 889-amino-acid chain; its full sequence is Alanine--tRNA ligase (889 aa).

Zn(2+)-binding residues include His-566, His-570, Cys-683, and His-687.

Belongs to the class-II aminoacyl-tRNA synthetase family. Zn(2+) is required as a cofactor.

It localises to the cytoplasm. It carries out the reaction tRNA(Ala) + L-alanine + ATP = L-alanyl-tRNA(Ala) + AMP + diphosphate. Catalyzes the attachment of alanine to tRNA(Ala) in a two-step reaction: alanine is first activated by ATP to form Ala-AMP and then transferred to the acceptor end of tRNA(Ala). Also edits incorrectly charged Ser-tRNA(Ala) and Gly-tRNA(Ala) via its editing domain. This chain is Alanine--tRNA ligase, found in Herpetosiphon aurantiacus (strain ATCC 23779 / DSM 785 / 114-95).